Reading from the N-terminus, the 899-residue chain is MASNLLSRLLPSASDDLLEQEASNNQNRRTSSSTDERPDMDIDEENFGARFEAQDLNDLLAEASSSHMTTESRAASPEARRNAPPGINTAARAPAWRQPAPARAVPLDDDDDVPQSLLLEGGLDPPPNPHPRPDGLPPPVPGPSTRHTRAQWETTRQQQRLHGDDRGGAPVRDWGAIGRGGQFTADPKEKASWLWVNQTDLDTYMREVYEYYVGSGIYSMILRRTLSLLQSAFVVGFMTFLGWCIDYSKLSGSNKLSQVLVPKCTKEIHGFWIFALWVFTIYWLYSFYGLLTDIPRLRAMHDFYHYLLDVPDRDIQTIQWQQIVSRIMALRDLNLTTASNLSPETRKLLDSKSRQRLDAVDIASRLMRRDNYLIALFNKEILDVTVPIPFLGNRFIFSETTGWHVNLAVMEFVFSGPNGQFNQDFLKERNRRELVRRLRGRFFWTGIISIICAPFAVVFVLASYLFKYFTEYHKDPGQLSNRDFTTFAQWKFREFNELPHLFNRRRNMAYPYANLYLAQFPKDKTEQISSFVAFIAGAFASVLVAFTLLDSELFLTFEISPGKTAIFWIGVLTTIYRVARGSSPQEDQVTDPSYYLDHVIYHTRYKPDSWQDRLHTDEVRAEFAKLYQPKILIFAEEILSMVVTPFLLMFRLPQCSERIVDFFREFSIVVDGLGVTCSYSMFPFKKGTQNVNNAPANRSGAHKDDGDLREDYFMAKDNKMLASYYGFLDTYATTGKGNSARLPGRAGFHPPPQFPNAFGAMSQTAQPVDVGARGTSRGPAGRQPLQRRTPRSGPAGRDEPIASVLLDPHHQPSSASILRGSPRTGPSGRYRTPLQPVADTPGTRIEEESTIGDSWRTSRLAQDDDEEEEAPGANRGGVLQLLQQFSKAQAEGRGAGVGV.

The disordered stretch occupies residues 1 to 173; that stretch reads MASNLLSRLL…DDRGGAPVRD (173 aa). At 1-224 the chain is on the cytoplasmic side; the sequence is MASNLLSRLL…SGIYSMILRR (224 aa). A compositionally biased stretch (low complexity) spans 23 to 33; it reads SNNQNRRTSSS. Residues 63–73 show a composition bias toward polar residues; sequence ASSSHMTTESR. The span at 90 to 104 shows a compositional bias: low complexity; that stretch reads AARAPAWRQPAPARA. The span at 124 to 142 shows a compositional bias: pro residues; it reads DPPPNPHPRPDGLPPPVPG. Polar residues predominate over residues 151-160; sequence QWETTRQQQR. The chain crosses the membrane as a helical span at residues 225 to 245; that stretch reads TLSLLQSAFVVGFMTFLGWCI. At 246-270 the chain is on the lumenal side; it reads DYSKLSGSNKLSQVLVPKCTKEIHG. The chain crosses the membrane as a helical span at residues 271–291; that stretch reads FWIFALWVFTIYWLYSFYGLL. Over 292–441 the chain is Cytoplasmic; the sequence is TDIPRLRAMH…RELVRRLRGR (150 aa). An intramembrane segment occupies 442–462; it reads FFWTGIISIICAPFAVVFVLA. Residues 463–527 lie on the Cytoplasmic side of the membrane; that stretch reads SYLFKYFTEY…AQFPKDKTEQ (65 aa). A helical transmembrane segment spans residues 528 to 548; the sequence is ISSFVAFIAGAFASVLVAFTL. At 549 to 552 the chain is on the lumenal side; it reads LDSE. The chain crosses the membrane as a helical span at residues 553 to 573; it reads LFLTFEISPGKTAIFWIGVLT. At 574 to 629 the chain is on the cytoplasmic side; it reads TIYRVARGSSPQEDQVTDPSYYLDHVIYHTRYKPDSWQDRLHTDEVRAEFAKLYQP. An intramembrane segment occupies 630 to 650; it reads KILIFAEEILSMVVTPFLLMF. Residues 651 to 899 lie on the Cytoplasmic side of the membrane; the sequence is RLPQCSERIV…AEGRGAGVGV (249 aa). The segment at 769–876 is disordered; that stretch reads DVGARGTSRG…EEEAPGANRG (108 aa). The segment covering 851–860 has biased composition (polar residues); that stretch reads IGDSWRTSRL.

Belongs to the ATG9 family. As to quaternary structure, homotrimer; forms a homotrimer with a central pore that forms a path between the two membrane leaflets. Post-translationally, phosphorylated by ATG1. ATG1 phosphorylation is required for preautophagosome elongation.

The protein localises to the preautophagosomal structure membrane. It is found in the cytoplasmic vesicle membrane. Its subcellular location is the golgi apparatus membrane. It localises to the endoplasmic reticulum membrane. It carries out the reaction a 1,2-diacyl-sn-glycero-3-phosphocholine(in) = a 1,2-diacyl-sn-glycero-3-phosphocholine(out). The enzyme catalyses a 1,2-diacyl-sn-glycero-3-phospho-L-serine(in) = a 1,2-diacyl-sn-glycero-3-phospho-L-serine(out). It catalyses the reaction a 1,2-diacyl-sn-glycero-3-phosphoethanolamine(in) = a 1,2-diacyl-sn-glycero-3-phosphoethanolamine(out). The catalysed reaction is a 1,2-diacyl-sn-glycero-3-phospho-(1D-myo-inositol-3-phosphate)(in) = a 1,2-diacyl-sn-glycero-3-phospho-(1D-myo-inositol-3-phosphate)(out). Its function is as follows. Phospholipid scramblase involved in autophagy and cytoplasm to vacuole transport (Cvt) vesicle formation. Cycles between the preautophagosomal structure/phagophore assembly site (PAS) and the cytoplasmic vesicle pool and supplies membrane for the growing autophagosome. Lipid scramblase activity plays a key role in preautophagosomal structure/phagophore assembly by distributing the phospholipids that arrive through ATG2 from the cytoplasmic to the luminal leaflet of the bilayer, thereby driving autophagosomal membrane expansion. Required for mitophagy. Also involved in endoplasmic reticulum-specific autophagic process and is essential for the survival of cells subjected to severe ER stress. Different machineries are required for anterograde trafficking to the PAS during either the Cvt pathway or bulk autophagy and for retrograde trafficking. The polypeptide is Autophagy-related protein 9 (ATG9) (Phaeosphaeria nodorum (strain SN15 / ATCC MYA-4574 / FGSC 10173) (Glume blotch fungus)).